The following is a 588-amino-acid chain: Lysophospholipase 2 (588 aa).

Residues 15-38 are disordered; sequence NRALPNAPDGYTPQGETCPSKRPS. The PLA2c domain occupies 31–574; it reads TCPSKRPSIR…KTYCWNGTIN (544 aa). N-linked (GlcNAc...) asparagine glycosylation is found at Asn41, Asn58, Asn77, Asn84, Asn88, Asn119, Asn123, Asn157, Asn167, Asn228, Asn272, Asn302, Asn340, Asn431, Asn449, Asn478, Asn481, Asn501, Asn510, Asn529, Asn553, Asn570, and Asn574.

Belongs to the lysophospholipase family.

The catalysed reaction is a 1-acyl-sn-glycero-3-phosphocholine + H2O = sn-glycerol 3-phosphocholine + a fatty acid + H(+). Its function is as follows. Catalyzes the release of fatty acids from lysophospholipids. In Aspergillus fumigatus (strain ATCC MYA-4609 / CBS 101355 / FGSC A1100 / Af293) (Neosartorya fumigata), this protein is Lysophospholipase 2 (plb2).